Reading from the N-terminus, the 485-residue chain is GTPase Obg (485 aa).

The Obg domain occupies 2–159 (SKFIDRVVLH…RDLVLELKSV (158 aa)). The disordered stretch occupies residues 64–84 (PHAKAGNGKPGEGGNRDGKMG). Residues 160 to 340 (ADVGLVGFPS…LTFALADLVR (181 aa)) enclose the OBG-type G domain. GTP is bound by residues 166 to 173 (GFPSAGKS), 191 to 195 (FTTLV), 212 to 215 (DVPG), 292 to 295 (NKTD), and 321 to 323 (SAV). Mg(2+) contacts are provided by Ser-173 and Thr-193. In terms of domain architecture, OCT spans 358-438 (PIAVDESGFT…IGDVTFDWEP (81 aa)). The span at 457–469 (LEQSDRVSAAERK) shows a compositional bias: basic and acidic residues. The interval 457–485 (LEQSDRVSAAERKHASRVRRGLVEDDEQR) is disordered.

This sequence belongs to the TRAFAC class OBG-HflX-like GTPase superfamily. OBG GTPase family. Monomer. Mg(2+) is required as a cofactor.

Its subcellular location is the cytoplasm. Functionally, an essential GTPase which binds GTP, GDP and possibly (p)ppGpp with moderate affinity, with high nucleotide exchange rates and a fairly low GTP hydrolysis rate. Plays a role in control of the cell cycle, stress response, ribosome biogenesis and in those bacteria that undergo differentiation, in morphogenesis control. The chain is GTPase Obg from Nocardia farcinica (strain IFM 10152).